Reading from the N-terminus, the 465-residue chain is Ribulose bisphosphate carboxylase large chain (465 aa).

Lys4 is modified (N6,N6,N6-trimethyllysine). Residues Asn113 and Thr163 each contribute to the substrate site. Residue Lys165 is the Proton acceptor of the active site. Lys167 lines the substrate pocket. The Mg(2+) site is built by Lys191, Asp193, and Glu194. Lys191 bears the N6-carboxylysine mark. The active-site Proton acceptor is the His284. Substrate is bound by residues Arg285, His317, and Ser369.

Belongs to the RuBisCO large chain family. Type I subfamily. As to quaternary structure, heterohexadecamer of 8 large chains and 8 small chains; disulfide-linked. The disulfide link is formed within the large subunit homodimers. It depends on Mg(2+) as a cofactor. In terms of processing, the disulfide bond which can form in the large chain dimeric partners within the hexadecamer appears to be associated with oxidative stress and protein turnover.

It localises to the plastid. It is found in the chloroplast. The enzyme catalyses 2 (2R)-3-phosphoglycerate + 2 H(+) = D-ribulose 1,5-bisphosphate + CO2 + H2O. It catalyses the reaction D-ribulose 1,5-bisphosphate + O2 = 2-phosphoglycolate + (2R)-3-phosphoglycerate + 2 H(+). In terms of biological role, ruBisCO catalyzes two reactions: the carboxylation of D-ribulose 1,5-bisphosphate, the primary event in carbon dioxide fixation, as well as the oxidative fragmentation of the pentose substrate in the photorespiration process. Both reactions occur simultaneously and in competition at the same active site. The chain is Ribulose bisphosphate carboxylase large chain from Ilex crenata (Japanese holly).